Reading from the N-terminus, the 160-residue chain is Cyclic di-GMP-binding protein Smlt4090 (160 aa).

5 residues coordinate 3',3'-c-di-GMP: K33, K132, R134, D135, and D160.

Belongs to the YajQ family.

In terms of biological role, cyclic di-GMP effector that significantly contributes to virulence. Binds bis-(3',5')-cyclic diguanylate (cyclic di-GMP or c-di-GMP), an important bacterial second messenger that controls a wide range of cellular processes. The sequence is that of Cyclic di-GMP-binding protein Smlt4090 from Stenotrophomonas maltophilia (strain K279a).